A 1188-amino-acid chain; its full sequence is Oxysterol-binding protein homolog 1 (1188 aa).

ANK repeat units lie at residues 51-80, 96-125, and 196-225; these read VLHL…STTN, NGNT…INDC, and TGDT…DPFK. A PH domain is found at 330-379; it reads MSSCSLHLDSSEKLKFEIIGGNNGVIRWHLKGNHPIETNRWVWAIQGAIR. S394 carries the post-translational modification Phosphoserine. Disordered stretches follow at residues 415–546 and 661–692; these read ATSK…GDED and QKKL…QEST. A compositionally biased stretch (polar residues) spans 424–433; sequence PHLSKSTLTQ. Low complexity predominate over residues 443–462; the sequence is TNNNNNKSNNDYDDNNNNNN. Residues 463 to 473 show a composition bias toward acidic residues; the sequence is NDDDDYDDDDE. Residues S490 and S500 each carry the phosphoserine modification. Acidic residues predominate over residues 514-529; sequence PSDDEGYSEDDSDDDG. A phosphoserine mark is found at S678, S683, and S691. A phosphothreonine mark is found at T692 and T694. Phosphoserine occurs at positions 708 and 712. Positions 716-722 match the FFAT motif; that stretch reads EFFDAEE. Residues 721 to 755 are disordered; that stretch reads EEAASDKKANDSEDLTTNKETPANAKPQEEAPEDE. An OSBP-related domain (ORD) region spans residues 800 to 1174; the sequence is LWSVLKSMVG…YWKFNGEYWN (375 aa). Ergosterol is bound by residues D834 and K962.

Belongs to the OSBP family. Interacts with NVJ1. Interacts with the AAA ATPase AFG2; regulates OSH1 membrane association. AFG2 is required for membrane dissociation of OSH1. Interacts with SCS2.

It localises to the golgi apparatus membrane. The protein resides in the nucleus outer membrane. Its subcellular location is the endoplasmic reticulum membrane. The protein localises to the vacuole membrane. Functionally, lipid transport protein (LTP) involved in non-vesicular transfer of lipids between membranes. Functions in phosphoinositide-coupled directional transport of various lipids by carrying the lipid molecule in a hydrophobic pocket and transferring it between membranes through the cytosol. Involved in maintenance of intracellular sterol distribution and homeostasis. Involved in non-vesicular transport of ergosterol and PI(4)P at the NVJ. Binds sterol and PI4P in a mutually exclusive manner. May be involved in formation of PMN vesicles by altering the membrane lipid composition. In Saccharomyces cerevisiae (strain ATCC 204508 / S288c) (Baker's yeast), this protein is Oxysterol-binding protein homolog 1.